A 463-amino-acid chain; its full sequence is uncharacterized protein (463 aa).

Transmembrane regions (helical) follow at residues 3–23 (IPPE…SLLV), 88–108 (VAAA…AELA), 112–132 (AIHG…PIAL), 216–236 (FSPA…DFLW), 245–265 (LLLL…SALI), and 276–296 (LPIA…AVAV). Positions 303–322 (VPGGSPPTSNPAPAAPSSNS) are disordered. Pro residues predominate over residues 306 to 316 (GSPPTSNPAPA). Helical transmembrane passes span 323–343 (VGSA…APPG) and 419–439 (AGTL…AGMV).

The protein belongs to the mycobacterial PPE family.

The protein localises to the cell membrane. This is an uncharacterized protein from Mycobacterium tuberculosis (strain CDC 1551 / Oshkosh).